The following is a 352-amino-acid chain: Photosystem II D2 protein (352 aa).

Position 2 is an N-acetylthreonine (T2). T2 carries the post-translational modification Phosphothreonine. The chain crosses the membrane as a helical span at residues 40–60; the sequence is CAYMALGGWLTGTTFVTSWYT. Position 117 (H117) interacts with chlorophyll a. The chain crosses the membrane as a helical span at residues 124–140; sequence GFMLRQFEIAQSLKLRP. 2 residues coordinate pheophytin a: Q129 and N142. A helical membrane pass occupies residues 152 to 165; sequence VFVSVFLIYPLGQA. H197 contacts chlorophyll a. The chain crosses the membrane as a helical span at residues 207–227; that stretch reads AALLCAIHGATVENTLFEDGD. Residues H214 and F261 each coordinate a plastoquinone. Residue H214 coordinates Fe cation. H268 is a binding site for Fe cation. A helical membrane pass occupies residues 278 to 294; the sequence is GLWMSAIGVVGLALNLR.

This sequence belongs to the reaction center PufL/M/PsbA/D family. As to quaternary structure, PSII is composed of 1 copy each of membrane proteins PsbA, PsbB, PsbC, PsbD, PsbE, PsbF, PsbH, PsbI, PsbJ, PsbK, PsbL, PsbM, PsbT, PsbX, PsbY, PsbZ, Psb30/Ycf12, at least 3 peripheral proteins of the oxygen-evolving complex and a large number of cofactors. It forms dimeric complexes. The cofactor is The D1/D2 heterodimer binds P680, chlorophylls that are the primary electron donor of PSII, and subsequent electron acceptors. It shares a non-heme iron and each subunit binds pheophytin, quinone, additional chlorophylls, carotenoids and lipids. There is also a Cl(-1) ion associated with D1 and D2, which is required for oxygen evolution. The PSII complex binds additional chlorophylls, carotenoids and specific lipids..

Its subcellular location is the plastid. The protein localises to the chloroplast thylakoid membrane. It carries out the reaction 2 a plastoquinone + 4 hnu + 2 H2O = 2 a plastoquinol + O2. Functionally, photosystem II (PSII) is a light-driven water:plastoquinone oxidoreductase that uses light energy to abstract electrons from H(2)O, generating O(2) and a proton gradient subsequently used for ATP formation. It consists of a core antenna complex that captures photons, and an electron transfer chain that converts photonic excitation into a charge separation. The D1/D2 (PsbA/PsbD) reaction center heterodimer binds P680, the primary electron donor of PSII as well as several subsequent electron acceptors. D2 is needed for assembly of a stable PSII complex. This Stigeoclonium helveticum (Green alga) protein is Photosystem II D2 protein.